The chain runs to 247 residues: Aliphatic sulfonates import ATP-binding protein SsuB 2 (247 aa).

The ABC transporter domain occupies 28–242; that stretch reads VSVRGLQRRY…ALRPILLEEL (215 aa). 60-67 contributes to the ATP binding site; the sequence is GESGCGKT.

The protein belongs to the ABC transporter superfamily. Aliphatic sulfonates importer (TC 3.A.1.17.2) family. The complex is composed of two ATP-binding proteins (SsuB), two transmembrane proteins (SsuC) and a solute-binding protein (SsuA).

The protein resides in the cell inner membrane. It catalyses the reaction ATP + H2O + aliphatic sulfonate-[sulfonate-binding protein]Side 1 = ADP + phosphate + aliphatic sulfonateSide 2 + [sulfonate-binding protein]Side 1.. Its function is as follows. Part of the ABC transporter complex SsuABC involved in aliphatic sulfonates import. Responsible for energy coupling to the transport system. The protein is Aliphatic sulfonates import ATP-binding protein SsuB 2 of Paraburkholderia xenovorans (strain LB400).